Here is a 527-residue protein sequence, read N- to C-terminus: MADEKRLEDLRSKIMESIGKSEKDVVPIENKRFNTDNAVIDTHFKRQKSDGELPKAPKSRNVSHSNNRGPSSIITMSTNRTTYEQTRAGPHRQSYRDASGRSYNRENRYSSHNTGPQWNNNPYNRQRDERRGRNERFDRRGRNGNGNYDRFNYQRKNEGSKFNGDRDKRQLQTNKYDMNYNSQNVMYPGSSFDSPAYYNMASSKANSRLVISGLSQSSDPSIVARLKDLLENFISGLQKTESNAEDFKISNFYIGEGRPDHIIVEFSSQICSTMVLACRSFFNAKLGTFDLKWRRPNDYVQQLDHLVDFCRGTVIALENLENIGEGEDYRMKELFSSLNVTNGTAKPLFYKCSSNTNNTGKESEFTKCILLSFEVVTQDILDKLKPYKWFKPNDGKISQVTSWITFQSLPNLVTQSVRVESRVLLLLNCLDPLDLKDETFITEIKETLKYSIAGADTIKICQPGVDYRLNFENLASGAGNIYIKFKTLEAAKHAMEELPGTQFNDRTVLCTYIDEDDFDMMEATQLS.

A disordered region spans residues 36 to 169 (DNAVIDTHFK…SKFNGDRDKR (134 aa)). Residues 42-55 (THFKRQKSDGELPK) show a composition bias toward basic and acidic residues. S49 bears the Phosphoserine mark. Over residues 60 to 85 (RNVSHSNNRGPSSIITMSTNRTTYEQ) the composition is skewed to polar residues. A compositionally biased stretch (basic and acidic residues) spans 94-109 (SYRDASGRSYNRENRY). The span at 110–122 (SSHNTGPQWNNNP) shows a compositional bias: polar residues. Composition is skewed to basic and acidic residues over residues 125–141 (RQRD…DRRG) and 155–169 (RKNE…RDKR). Positions 424 to 511 (LLLLNCLDPL…QFNDRTVLCT (88 aa)) constitute an RRM domain.

MSL5, MUD2 and PRP40 interact to form the commitment complex 2 (CC2), a precursor of mature spliceosomes.

In terms of biological role, splicing factor that contacts pre-mRNA directly and is a component of the pre-mRNA-U1 snRNP complex (commitment complex 2) that forms during early spliceosome assembly in yeast extracts. The chain is Splicing factor MUD2 (MUD2) from Saccharomyces cerevisiae (strain ATCC 204508 / S288c) (Baker's yeast).